Reading from the N-terminus, the 325-residue chain is Adenine deaminase (325 aa).

Zn(2+) is bound by residues His-11, His-13, and His-189. Glu-192 (proton donor) is an active-site residue. Position 270 (Asp-270) interacts with Zn(2+). Position 271 (Asp-271) interacts with substrate.

It belongs to the metallo-dependent hydrolases superfamily. Adenosine and AMP deaminases family. Adenine deaminase type 2 subfamily. It depends on Zn(2+) as a cofactor.

It carries out the reaction adenine + H2O + H(+) = hypoxanthine + NH4(+). Functionally, catalyzes the hydrolytic deamination of adenine to hypoxanthine. Plays an important role in the purine salvage pathway and in nitrogen catabolism. This chain is Adenine deaminase, found in Agrobacterium fabrum (strain C58 / ATCC 33970) (Agrobacterium tumefaciens (strain C58)).